We begin with the raw amino-acid sequence, 317 residues long: Beta-ketoacyl-[acyl-carrier-protein] synthase III (317 aa).

Active-site residues include Cys-112 and His-244. An ACP-binding region spans residues 245-249 (QANIR). Residue Asn-274 is part of the active site.

Belongs to the thiolase-like superfamily. FabH family. As to quaternary structure, homodimer.

It localises to the cytoplasm. The enzyme catalyses malonyl-[ACP] + acetyl-CoA + H(+) = 3-oxobutanoyl-[ACP] + CO2 + CoA. The protein operates within lipid metabolism; fatty acid biosynthesis. Its function is as follows. Catalyzes the condensation reaction of fatty acid synthesis by the addition to an acyl acceptor of two carbons from malonyl-ACP. Catalyzes the first condensation reaction which initiates fatty acid synthesis and may therefore play a role in governing the total rate of fatty acid production. Possesses both acetoacetyl-ACP synthase and acetyl transacylase activities. Its substrate specificity determines the biosynthesis of branched-chain and/or straight-chain of fatty acids. This chain is Beta-ketoacyl-[acyl-carrier-protein] synthase III, found in Rickettsia akari (strain Hartford).